A 518-amino-acid chain; its full sequence is Type II methyltransferase M.HindII (518 aa).

Belongs to the N(4)/N(6)-methyltransferase family.

The catalysed reaction is a 2'-deoxyadenosine in DNA + S-adenosyl-L-methionine = an N(6)-methyl-2'-deoxyadenosine in DNA + S-adenosyl-L-homocysteine + H(+). A gamma subtype methylase, recognizes the double-stranded sequence 5'-GTYRAC-3', methylates A-5 on both strands, and protects the DNA from cleavage by the HindII endonuclease. The protein is Type II methyltransferase M.HindII (hindIIM) of Haemophilus influenzae (strain ATCC 51907 / DSM 11121 / KW20 / Rd).